A 158-amino-acid polypeptide reads, in one-letter code: ATP synthase subunit delta (158 aa).

This sequence belongs to the ATPase delta chain family. As to quaternary structure, F-type ATPases have 2 components, F(1) - the catalytic core - and F(0) - the membrane proton channel. F(1) has five subunits: alpha(3), beta(3), gamma(1), delta(1), epsilon(1). F(0) has three main subunits: a(1), b(2) and c(10-14). The alpha and beta chains form an alternating ring which encloses part of the gamma chain. F(1) is attached to F(0) by a central stalk formed by the gamma and epsilon chains, while a peripheral stalk is formed by the delta and b chains.

Its subcellular location is the cell membrane. Its function is as follows. F(1)F(0) ATP synthase produces ATP from ADP in the presence of a proton or sodium gradient. F-type ATPases consist of two structural domains, F(1) containing the extramembraneous catalytic core and F(0) containing the membrane proton channel, linked together by a central stalk and a peripheral stalk. During catalysis, ATP synthesis in the catalytic domain of F(1) is coupled via a rotary mechanism of the central stalk subunits to proton translocation. This protein is part of the stalk that links CF(0) to CF(1). It either transmits conformational changes from CF(0) to CF(1) or is implicated in proton conduction. The polypeptide is ATP synthase subunit delta (Roseiflexus castenholzii (strain DSM 13941 / HLO8)).